The primary structure comprises 457 residues: GTPase Era, mitochondrial (457 aa).

Residues 1-18 (MAFRVSISTFGKSLRVRR) constitute a mitochondrion transit peptide. The Era-type G domain occupies 107 to 350 (KVLRVAIIGA…RYLVVGAKPG (244 aa)). Residues 115 to 122 (GAPNAGKS) are G1. Position 115 to 122 (115 to 122 (GAPNAGKS)) interacts with GTP. Residues 141-145 (HTTRA) form a G2 region. Residues 162–165 (DTPG) are G3. Residues 162 to 166 (DTPGL) and 231 to 234 (NKVD) contribute to the GTP site. The G4 stretch occupies residues 231 to 234 (NKVD). Over residues 270–290 (AERRTDREARTSGSGDEEKPG) the composition is skewed to basic and acidic residues. A disordered region spans residues 270 to 300 (AERRTDREARTSGSGDEEKPGGDVADGEGSE). Residues 328–330 (VSA) form a G5 region. Positions 376–457 (LLEYLPKEVP…KLRLSVKVKN (82 aa)) constitute a KH type-2 domain.

This sequence belongs to the TRAFAC class TrmE-Era-EngA-EngB-Septin-like GTPase superfamily. Era GTPase family.

Its subcellular location is the mitochondrion matrix. The protein localises to the mitochondrion inner membrane. Probable GTPase that plays a role in the mitochondrial ribosomal small subunit assembly. Specifically binds the 12S mitochondrial rRNA (12S mt-rRNA) to a 33 nucleotide section delineating the 3' terminal stem-loop region. May act as a chaperone that protects the 12S mt-rRNA on the 28S mitoribosomal subunit during ribosomal small subunit assembly. The protein is GTPase Era, mitochondrial (eral1) of Salmo salar (Atlantic salmon).